The chain runs to 443 residues: Putative metabolite transport protein YaaU (443 aa).

The Cytoplasmic segment spans residues 1–18; it reads MQPSRNFDDLKFSSIHRR. Residues 19–39 traverse the membrane as a helical segment; it reads ILLWGSGGPFLDGYVLVMIGV. At 40-53 the chain is on the periplasmic side; it reads ALEQLTPALKLDAD. A helical transmembrane segment spans residues 54–74; the sequence is WIGLLGAGTLAGLFVGTSLFG. At 75-84 the chain is on the cytoplasmic side; that stretch reads YISDKVGRRK. Residues 85–105 form a helical membrane-spanning segment; sequence MFLIDIIAIGVISVATMFVSS. Residues 106 to 113 lie on the Periplasmic side of the membrane; it reads PVELLVMR. Residues 114-134 traverse the membrane as a helical segment; the sequence is VLIGIVIGADYPIATSMITEF. The Cytoplasmic segment spans residues 135-145; the sequence is SSTRQRAFSIS. Residues 146 to 166 form a helical membrane-spanning segment; sequence FIAAMWYVGATCADLVGYWLY. The Periplasmic portion of the chain corresponds to 167–173; it reads DVEGGWR. The helical transmembrane segment at 174–194 threads the bilayer; sequence WMLGSAAIPCLLILIGRFELP. Topologically, residues 195-241 are cytoplasmic; it reads ESPRWLLRKGRVKECEEMMIKLFGEPVAFDEEQPQQTRFRDLFNRRH. A helical transmembrane segment spans residues 242 to 262; that stretch reads FPFVLFVAAIWTCQVIPMFAI. The Periplasmic segment spans residues 263 to 282; sequence YTFGPQIVGLLGLGVGKNAA. The chain crosses the membrane as a helical span at residues 283–303; that stretch reads LGNVVISLFFMLGCIPPMLWL. At 304–309 the chain is on the cytoplasmic side; the sequence is NTAGRR. Residues 310–329 traverse the membrane as a helical segment; the sequence is PLLIGSFAMMTLALAVLGLI. Over 330 to 334 the chain is Periplasmic; sequence PDMGI. The helical transmembrane segment at 335 to 357 threads the bilayer; the sequence is WLVVMAFAVYAFFSGGPGNLQWL. The Cytoplasmic portion of the chain corresponds to 358-373; it reads YPNELFPTDIRASAVG. Residues 374 to 394 traverse the membrane as a helical segment; the sequence is VIMSLSRIGTIVSTWALPIFI. The Periplasmic segment spans residues 395–401; it reads NNYGISN. Residues 402-422 traverse the membrane as a helical segment; the sequence is TMLMGAGISLFGLLISVAFAP. The Cytoplasmic segment spans residues 423–443; the sequence is ETRGMSLAQTSNMTIRGQRMG.

Belongs to the major facilitator superfamily. Sugar transporter (TC 2.A.1.1) family.

The protein resides in the cell inner membrane. The chain is Putative metabolite transport protein YaaU (yaaU) from Escherichia coli (strain K12).